The chain runs to 147 residues: uncharacterized protein (147 aa).

Residues 3-23 (APMIGMVVLVVVLGLAVLALS) form a helical membrane-spanning segment.

It to M.leprae ML1147.

Its subcellular location is the membrane. This is an uncharacterized protein from Mycobacterium tuberculosis (strain CDC 1551 / Oshkosh).